A 596-amino-acid chain; its full sequence is Transketolase-like protein 1 (596 aa).

Histidine 46 contributes to the substrate binding site. Thiamine diphosphate is bound by residues serine 49 and 94–96 (GWL). Residue aspartate 126 participates in Mg(2+) binding. Positions 127 and 156 each coordinate thiamine diphosphate. Mg(2+) contacts are provided by asparagine 156 and leucine 158. Lysine 218 and histidine 232 together coordinate thiamine diphosphate. Substrate is bound by residues histidine 232, arginine 292, and serine 319. Glutamate 340 and phenylalanine 366 together coordinate thiamine diphosphate. Residue glutamate 340 is the Proton donor of the active site. The substrate site is built by histidine 390 and aspartate 398. Glutamine 402 serves as a coordination point for thiamine diphosphate. Arginine 448 contributes to the substrate binding site.

This sequence belongs to the transketolase family. In terms of assembly, homodimer. Requires Mg(2+) as cofactor. The cofactor is Ca(2+). It depends on Mn(2+) as a cofactor. Co(2+) is required as a cofactor. Thiamine diphosphate serves as cofactor.

The protein resides in the cytoplasm. It catalyses the reaction D-sedoheptulose 7-phosphate + D-glyceraldehyde 3-phosphate = aldehydo-D-ribose 5-phosphate + D-xylulose 5-phosphate. Catalyzes the transfer of a two-carbon ketol group from a ketose donor to an aldose acceptor, via a covalent intermediate with the cofactor thiamine pyrophosphate. This Macaca fascicularis (Crab-eating macaque) protein is Transketolase-like protein 1 (TKTL1).